A 259-amino-acid chain; its full sequence is Protein-L-isoaspartate O-methyltransferase 1 (259 aa).

Residue Ser-109 is part of the active site.

The protein belongs to the methyltransferase superfamily. L-isoaspartyl/D-aspartyl protein methyltransferase family.

It is found in the cytoplasm. The catalysed reaction is [protein]-L-isoaspartate + S-adenosyl-L-methionine = [protein]-L-isoaspartate alpha-methyl ester + S-adenosyl-L-homocysteine. Catalyzes the methyl esterification of L-isoaspartyl residues in peptides and proteins that result from spontaneous decomposition of normal L-aspartyl and L-asparaginyl residues. It plays a role in the repair and/or degradation of damaged proteins. The chain is Protein-L-isoaspartate O-methyltransferase 1 from Cupriavidus necator (strain ATCC 17699 / DSM 428 / KCTC 22496 / NCIMB 10442 / H16 / Stanier 337) (Ralstonia eutropha).